Consider the following 128-residue polypeptide: Con-Ins F2 (128 aa).

Residues 1 to 24 (MTTSSYFLLVALGLLLYVCRSSFG) form the signal peptide. Intrachain disulfides connect cysteine 29/cysteine 104, cysteine 41/cysteine 107, cysteine 53/cysteine 120, and cysteine 106/cysteine 111. The propeptide at 59 to 89 (LQGGTGKKRGRASLLRKRRAFLSMLKARAKR) is c peptide. Glutamate 115 carries the 4-carboxyglutamate; partial modification. Serine 127 carries the serine amide modification.

This sequence belongs to the insulin family. As to quaternary structure, heterodimer of A and B chains; disulfide-linked. In terms of tissue distribution, expressed by the venom gland.

Its subcellular location is the secreted. This venom insulin facilitates prey capture by rapidly inducing hypoglycemic shock. Intraperitoneal injection of this peptide into zebrafish lowers blood glucose with the same potency than human insulin. In vivo, when applied to water, this peptide reduces overall locomotor activity of zebrafish larvae, observed as a significant decrease in the percentage of time spent swimming and movement frequency. The protein is Con-Ins F2 of Conus floridulus (Cone snail).